The following is a 162-amino-acid chain: Protein cornichon homolog 2 (162 aa).

The Cytoplasmic portion of the chain corresponds to 1 to 10 (MAFTFAAFCY). The helical transmembrane segment at 11–31 (MLTLVLCASLIFFIIWHIIAF) threads the bilayer. Topologically, residues 32 to 72 (DELRTDFKNPIEQGNPSRARERVKNVERICCLLRKLVVPEY) are lumenal. The chain crosses the membrane as a helical span at residues 73 to 93 (CIHGLFCLMFMCAAEWVTLGL). Residues 94–138 (NIPLLFYHLWRYFHRPADGSEVMFDPVSIMNVDILNYCQKEAWCK) lie on the Cytoplasmic side of the membrane. The chain crosses the membrane as a helical span at residues 139 to 161 (LAFYLLSFFYYLYRVGATVRYVS). Ala162 is a topological domain (lumenal).

This sequence belongs to the cornichon family.

It localises to the membrane. Its function is as follows. Regulates the trafficking and gating properties of AMPA-selective glutamate receptors (AMPARs). The polypeptide is Protein cornichon homolog 2 (cnih2) (Xenopus tropicalis (Western clawed frog)).